The following is a 652-amino-acid chain: DNA ligase (652 aa).

Residues 29-33 (DAEYD), 78-79 (SL), and E107 contribute to the NAD(+) site. K109 (N6-AMP-lysine intermediate) is an active-site residue. NAD(+) contacts are provided by R130, E164, K278, and K302. Zn(2+)-binding residues include C395, C398, C413, and C418. The BRCT domain occupies 577–652 (DENAALSGMT…IKDEAWLESL (76 aa)).

Belongs to the NAD-dependent DNA ligase family. LigA subfamily. Requires Mg(2+) as cofactor. Mn(2+) serves as cofactor.

It carries out the reaction NAD(+) + (deoxyribonucleotide)n-3'-hydroxyl + 5'-phospho-(deoxyribonucleotide)m = (deoxyribonucleotide)n+m + AMP + beta-nicotinamide D-nucleotide.. Its function is as follows. DNA ligase that catalyzes the formation of phosphodiester linkages between 5'-phosphoryl and 3'-hydroxyl groups in double-stranded DNA using NAD as a coenzyme and as the energy source for the reaction. It is essential for DNA replication and repair of damaged DNA. In Streptococcus suis (strain 05ZYH33), this protein is DNA ligase.